A 319-amino-acid polypeptide reads, in one-letter code: L-lactate dehydrogenase (319 aa).

NAD(+)-binding positions include valine 17, aspartate 38, lysine 43, tyrosine 69, and 83–84 (GA). Residues glutamine 86, arginine 92, and 124-127 (NPVD) each bind substrate. NAD(+)-binding positions include 122–124 (ATN) and serine 147. Substrate is bound at residue 152 to 155 (DTAR). Positions 157 and 172 each coordinate beta-D-fructose 1,6-bisphosphate. The Proton acceptor role is filled by histidine 179. Tyrosine 224 carries the post-translational modification Phosphotyrosine. Residue threonine 233 coordinates substrate.

The protein belongs to the LDH/MDH superfamily. LDH family. Homotetramer.

It localises to the cytoplasm. It carries out the reaction (S)-lactate + NAD(+) = pyruvate + NADH + H(+). It functions in the pathway fermentation; pyruvate fermentation to lactate; (S)-lactate from pyruvate: step 1/1. With respect to regulation, allosterically activated by fructose 1,6-bisphosphate (FBP). Functionally, catalyzes the conversion of lactate to pyruvate. The sequence is that of L-lactate dehydrogenase from Bacillus licheniformis (strain ATCC 14580 / DSM 13 / JCM 2505 / CCUG 7422 / NBRC 12200 / NCIMB 9375 / NCTC 10341 / NRRL NRS-1264 / Gibson 46).